A 300-amino-acid polypeptide reads, in one-letter code: Putative lysophosphatidic acid:oleoyl-CoA acyltransferase (300 aa).

The chain crosses the membrane as a helical span at residues 32-52 (WILIVVVMILRVPLCIISVTL). Residues 115–120 (HSSPLD) carry the HXXXXD motif motif.

Belongs to the 1-acyl-sn-glycerol-3-phosphate acyltransferase family.

Its subcellular location is the lipid droplet. The protein localises to the endoplasmic reticulum membrane. It localises to the golgi apparatus membrane. It catalyses the reaction a 1-acyl-sn-glycero-3-phosphate + an acyl-CoA = a 1,2-diacyl-sn-glycero-3-phosphate + CoA. Acyl-CoA-dependent lysophosphatidic acid acyltransferase with preference for oleoyl-CoA. Involved in triacylglyceride homeostasis and lipid droplet formation. Involved in vacuolar protein sorting. This Schizosaccharomyces pombe (strain 972 / ATCC 24843) (Fission yeast) protein is Putative lysophosphatidic acid:oleoyl-CoA acyltransferase (vps66).